We begin with the raw amino-acid sequence, 338 residues long: Phosphate acyltransferase (338 aa).

It belongs to the PlsX family. In terms of assembly, homodimer. Probably interacts with PlsY.

The protein localises to the cytoplasm. The catalysed reaction is a fatty acyl-[ACP] + phosphate = an acyl phosphate + holo-[ACP]. Its pathway is lipid metabolism; phospholipid metabolism. Its function is as follows. Catalyzes the reversible formation of acyl-phosphate (acyl-PO(4)) from acyl-[acyl-carrier-protein] (acyl-ACP). This enzyme utilizes acyl-ACP as fatty acyl donor, but not acyl-CoA. This Gloeobacter violaceus (strain ATCC 29082 / PCC 7421) protein is Phosphate acyltransferase.